The primary structure comprises 329 residues: D-alanine--D-alanine ligase (329 aa).

An ATP-grasp domain is found at 120 to 326 (KLWYDAIGIP…FHEFLADCIN (207 aa)). 150–205 (AFDKWGKVFVKAARQGSSVGCYSVTNKQSVSQAVNDAFGYSEQVLVEKSVKPRELE) contributes to the ATP binding site. Mg(2+) contacts are provided by Asp-280, Glu-293, and Asn-295.

It belongs to the D-alanine--D-alanine ligase family. Mg(2+) is required as a cofactor. It depends on Mn(2+) as a cofactor.

The protein localises to the cytoplasm. The catalysed reaction is 2 D-alanine + ATP = D-alanyl-D-alanine + ADP + phosphate + H(+). It participates in cell wall biogenesis; peptidoglycan biosynthesis. In terms of biological role, cell wall formation. In Vibrio campbellii (strain ATCC BAA-1116), this protein is D-alanine--D-alanine ligase.